A 701-amino-acid chain; its full sequence is Putative pectinesterase/pectinesterase inhibitor 43 (701 aa).

Positions 1-22 (MNKYVLLGVTALIMAMVICVEA) are cleaved as a signal peptide. The interval 42–195 (MITKTTVSII…QHLTSNGLAI (154 aa)) is pectinesterase inhibitor 43. 2 stretches are compositionally biased toward low complexity: residues 221-256 (GILGSGSSRDESVGSSQDSPPNEDSSDDSPSTVDSS) and 263-275 (SSSENQSSDSSNN). The disordered stretch occupies residues 221–351 (GILGSGSSRD…DPLRKLNPLN (131 aa)). An N-linked (GlcNAc...) asparagine glycan is attached at Asn-267. Composition is skewed to polar residues over residues 276-287 (RPLDSSKNQQME) and 313-338 (QKSTSSENQPLDSSENPPQKSTSSEN). The interval 391–688 (NVVVAKDGSG…FAPGNFLRGN (298 aa)) is pectinesterase 43. Residues Thr-467 and Gln-497 each contribute to the substrate site. Residue Asp-520 is the Proton donor; for pectinesterase activity of the active site. Residues Cys-534 and Cys-554 are joined by a disulfide bond. The Nucleophile; for pectinesterase activity role is filled by Asp-541. 2 residues coordinate substrate: Arg-609 and Trp-611. N-linked (GlcNAc...) asparagine glycosylation occurs at Asn-637.

The protein in the N-terminal section; belongs to the PMEI family. It in the C-terminal section; belongs to the pectinesterase family. Expressed in flower buds.

It localises to the secreted. The protein resides in the cell wall. The enzyme catalyses [(1-&gt;4)-alpha-D-galacturonosyl methyl ester](n) + n H2O = [(1-&gt;4)-alpha-D-galacturonosyl](n) + n methanol + n H(+). Its pathway is glycan metabolism; pectin degradation; 2-dehydro-3-deoxy-D-gluconate from pectin: step 1/5. Functionally, acts in the modification of cell walls via demethylesterification of cell wall pectin. The chain is Putative pectinesterase/pectinesterase inhibitor 43 (PME43) from Arabidopsis thaliana (Mouse-ear cress).